Here is an 892-residue protein sequence, read N- to C-terminus: Alanine--tRNA ligase (892 aa).

Zn(2+) contacts are provided by H596, H600, C700, and H704.

It belongs to the class-II aminoacyl-tRNA synthetase family. Requires Zn(2+) as cofactor.

It is found in the cytoplasm. The catalysed reaction is tRNA(Ala) + L-alanine + ATP = L-alanyl-tRNA(Ala) + AMP + diphosphate. Functionally, catalyzes the attachment of alanine to tRNA(Ala) in a two-step reaction: alanine is first activated by ATP to form Ala-AMP and then transferred to the acceptor end of tRNA(Ala). Also edits incorrectly charged Ser-tRNA(Ala) and Gly-tRNA(Ala) via its editing domain. The sequence is that of Alanine--tRNA ligase from Methanococcus maripaludis (strain C6 / ATCC BAA-1332).